Reading from the N-terminus, the 382-residue chain is SAT4 family membrane protein (382 aa).

The tract at residues 1 to 22 is disordered; that stretch reads MFGAELVGRETGGQSTDQPYSY. Residue Asn-78 is glycosylated (N-linked (GlcNAc...) asparagine). 2 consecutive transmembrane segments (helical) span residues 80-100 and 112-132; these read SQILYAPLIFVTKLSIFLLYL and YLSIHLLIWFNLAFYLANFFL. Asn-147 carries N-linked (GlcNAc...) asparagine glycosylation. Transmembrane regions (helical) follow at residues 159 to 179, 192 to 212, and 228 to 248; these read ILVTAAINVVSDLLMLCLPII, LGISAIFAAGIFGCFASIMRL, and WYTEITCGILASCLPALPTFF. Asn-269 is a glycosylation site (N-linked (GlcNAc...) asparagine).

It belongs to the SAT4 family.

It is found in the membrane. The protein is SAT4 family membrane protein of Emericella nidulans (strain FGSC A4 / ATCC 38163 / CBS 112.46 / NRRL 194 / M139) (Aspergillus nidulans).